The chain runs to 470 residues: Dynein axonemal assembly factor 11 (470 aa).

4 LRR repeats span residues 20–43, 44–65, 66–89, and 90–110; these read IFSL…DKWC, RELK…VSKL, KKLE…GCES, and LQKL…NSLQ. Residues 128 to 146 form the LRRCT domain; sequence YEGYRQYVVATLPQLKWLD. A coiled-coil region spans residues 177 to 288; the sequence is LRKRAAEREK…NRSEEELKKK (112 aa). A disordered region spans residues 182–265; sequence AEREKATNNL…SQYTPESRLE (84 aa). A compositionally biased stretch (basic and acidic residues) spans 194-213; that stretch reads KQKEGRKAQEKKPGFDRRWY. A CS domain is found at 303 to 395; sequence VNESKLDFSL…TEMIQTKRAK (93 aa). The interval 447-470 is disordered; it reads HRNSARDTADSEDFIDNAEVPPLV.

This sequence belongs to the tilB family.

It localises to the cytoplasm. The protein resides in the cell projection. The protein localises to the cilium. It is found in the dynein axonemal particle. Its subcellular location is the flagellum. Its function is as follows. Involved in dynein arm assembly, is important for expression and transporting outer dynein arm (ODA) proteins from the cytoplasm to the cilia. This is Dynein axonemal assembly factor 11 (dnaaf11) from Xenopus tropicalis (Western clawed frog).